The sequence spans 69 residues: Putative transmembrane protein ORF34 (69 aa).

The next 2 helical transmembrane spans lie at 7–27 (LLSV…MMQF) and 42–62 (VSLM…IVYF).

The protein localises to the host membrane. In Haloarcula hispanica (His1V), this protein is Putative transmembrane protein ORF34.